The sequence spans 321 residues: Glucokinase (321 aa).

An ATP-binding site is contributed by 8-13 (ADIGGT).

It belongs to the bacterial glucokinase family.

The protein resides in the cytoplasm. It catalyses the reaction D-glucose + ATP = D-glucose 6-phosphate + ADP + H(+). In Photorhabdus laumondii subsp. laumondii (strain DSM 15139 / CIP 105565 / TT01) (Photorhabdus luminescens subsp. laumondii), this protein is Glucokinase.